We begin with the raw amino-acid sequence, 579 residues long: Zinc finger protein 382 (579 aa).

The segment covering 1 to 12 has biased composition (basic residues); the sequence is MGRPGRKPRGRA. Residues 1-37 are disordered; it reads MGRPGRKPRGRARPGLFPFPKEELRQGGSSPANLNAM. The mediates interaction with TRIM28 stretch occupies residues 12-135; sequence ARPGLFPFPK…DKPPKSIVII (124 aa). The segment covering 27–36 has biased composition (polar residues); the sequence is GGSSPANLNA. Represses transcription stretches follow at residues 40-81 and 105-240; these read GPVS…FISV and IFPS…PEQR. Residues 42–113 form the KRAB domain; sequence VSFKDVTVDF…RIFPSQSYLE (72 aa). The C2H2-type 1; degenerate zinc finger occupies 241–263; it reads FEYNKCDSSFLMTGVEFPHGRAH. 9 consecutive C2H2-type zinc fingers follow at residues 325–347, 353–375, 381–403, 409–431, 437–459, 465–487, 493–515, 521–543, and 549–571; these read FQCPYCGNSFRRKSYLIEHERIH, YICCQCGRAFRQKTALTLHEKTH, YLCVDCGKSFRQKATLTRHHKAH, YECTQCGSAFGKKSYLIDHQRTH, YQCTECGKAFIQKTTLTVHQRTH, YICSECGKSFCQKTTLTLHQRIH, YICSDCGKSFRQKAILTVHYRIH, NGCPQCGKAFSRKSNLIRHQKIH, and YECQECGKFFSCKSNLITHQKTH. The interval 325–579 is required for transcriptional repression activity; probably mediates sequence-specific DNA-binding; the sequence is FQCPYCGNSF…THKTETMRFQ (255 aa).

This sequence belongs to the krueppel C2H2-type zinc-finger protein family. Interacts with TRIM28; enhances the transcriptional repressor activity.

It localises to the nucleus. Functions as a sequence-specific transcriptional repressor. This is Zinc finger protein 382 (Znf382) from Mus musculus (Mouse).